The sequence spans 402 residues: N-acetyltransferase Eis (402 aa).

In terms of domain architecture, N-acetyltransferase spans 3–154; sequence VTLCSPTEDD…RFARFHADAP (152 aa). Acetyl-CoA is bound by residues 85 to 87, 93 to 98, and 121 to 122; these read VAV, RRGLLR, and SE. Tyr126 acts as the Proton donor in catalysis. Residue Phe402 is the Proton acceptor; via carboxylate of the active site.

The protein belongs to the acetyltransferase Eis family. In terms of assembly, homohexamer; trimer of dimers.

Its subcellular location is the secreted. It localises to the host cytoplasmic vesicle. The protein resides in the host phagosome. The protein localises to the extracellular vesicle. It is found in the bacterial extracellular vesicle. Its subcellular location is the host extracellular space. The enzyme catalyses L-lysyl-[protein] + acetyl-CoA = N(6)-acetyl-L-lysyl-[protein] + CoA + H(+). In terms of biological role, effector that is released into the host cell and affects host immune responses. Acts as an acetyltransferase that acetylates lysine residues of host proteins. This chain is N-acetyltransferase Eis, found in Mycobacterium bovis (strain BCG / Pasteur 1173P2).